Reading from the N-terminus, the 288-residue chain is Energy-coupling factor transporter ATP-binding protein EcfA2 (288 aa).

The region spanning isoleucine 2 to glycine 244 is the ABC transporter domain. Glycine 39–serine 46 serves as a coordination point for ATP. Glutamate 170 functions as the Proton acceptor in the catalytic mechanism.

This sequence belongs to the ABC transporter superfamily. Energy-coupling factor EcfA family. Forms a stable energy-coupling factor (ECF) transporter complex composed of 2 membrane-embedded substrate-binding proteins (S component), 2 ATP-binding proteins (A component) and 2 transmembrane proteins (T component). In L.lactis forms a stable complex with EcfA' and EcfT and substrate-binding components. In E.coli forms a stable complex with EcfA, EcfT and individually with 3 tested substrate-binding components (BioY, NiaX and ThiT) with a stoichiometry of 1.1:1:1. The core ECF complex interacts with a number of substrate-specific binding components, including BioY, BioY2, HmpT, NiaX, PanT, QueT, RibU and ThiT.

It localises to the cell membrane. Its function is as follows. ATP-binding (A) component of a common energy-coupling factor (ECF) ABC-transporter complex. Unlike classic ABC transporters this ECF transporter provides the energy necessary to transport a number of different substrates. In this organism these probably include biotin, thiamine precursor, niacin, pantothenic acid, queuosine precursor, riboflavin and thiamine. Uptake of niacin or riboflavin into proteosomes containing EcfA1A2T and Niax or RibU has been demonstrated. Uptake requires hydrolyzable Mg-ATP and is substrate-specific; NiaX-containing proteosomes did not transport riboflavin. The protein is Energy-coupling factor transporter ATP-binding protein EcfA2 of Lactococcus lactis subsp. cremoris (strain MG1363).